We begin with the raw amino-acid sequence, 260 residues long: Exosome complex component Rrp4 (260 aa).

One can recognise an S1 motif domain in the interval 59–128 (NDVVIGVVIV…SSMKIELALR (70 aa)). The region spanning 136-194 (RTGQIVEVEPVKVPRVIGHGGSMISMLKKETNCSIFVGQNGRIWIDGKDEDIELLSKAL) is the KH domain.

It belongs to the RRP4 family. Component of the archaeal exosome complex. Forms a trimer of Rrp4 and/or Csl4 subunits. The trimer associates with a hexameric ring-like arrangement composed of 3 Rrp41-Rrp42 heterodimers.

The protein localises to the cytoplasm. Functionally, non-catalytic component of the exosome, which is a complex involved in RNA degradation. Increases the RNA binding and the efficiency of RNA degradation. Confers strong poly(A) specificity to the exosome. In Methanosarcina mazei (strain ATCC BAA-159 / DSM 3647 / Goe1 / Go1 / JCM 11833 / OCM 88) (Methanosarcina frisia), this protein is Exosome complex component Rrp4.